The sequence spans 377 residues: Serine protease inhibitor (377 aa).

The signal sequence occupies residues 1–27; sequence MAALQAAVSSQLAISFFSSLIVPGAEK. N-linked (GlcNAc...) asparagine glycosylation is present at Asn-301. Residues 328–349 are RCL; that stretch reads GTEAAAATGFGVNFMSMPMQVR. Residue Asn-361 is glycosylated (N-linked (GlcNAc...) asparagine).

Belongs to the serpin family.

In terms of biological role, inhibitor of serine proteases. Inhibits chymotrypsin, cathepsin G and human neutrophil elastase. This is Serine protease inhibitor from Cyanea capillata (Lion's mane jellyfish).